Here is a 454-residue protein sequence, read N- to C-terminus: Cysteine--tRNA ligase (454 aa).

Position 27 (cysteine 27) interacts with Zn(2+). Residues 29–39 carry the 'HIGH' region motif; that stretch reads PTVQDHFHIGH. 3 residues coordinate Zn(2+): aspartate 207, histidine 232, and glutamate 236. Positions 265-269 match the 'KMSKS' region motif; that stretch reads KMSKS. Residue lysine 268 coordinates ATP.

Belongs to the class-I aminoacyl-tRNA synthetase family. Requires Zn(2+) as cofactor.

It is found in the cytoplasm. It catalyses the reaction tRNA(Cys) + L-cysteine + ATP = L-cysteinyl-tRNA(Cys) + AMP + diphosphate. The sequence is that of Cysteine--tRNA ligase from Thermoplasma volcanium (strain ATCC 51530 / DSM 4299 / JCM 9571 / NBRC 15438 / GSS1).